The following is a 396-amino-acid chain: Pyruvate synthase subunit PorA (396 aa).

As to quaternary structure, heterotetramer of one alpha, one beta, one delta and one gamma chain.

It catalyses the reaction 2 oxidized [2Fe-2S]-[ferredoxin] + pyruvate + CoA = 2 reduced [2Fe-2S]-[ferredoxin] + acetyl-CoA + CO2 + H(+). This chain is Pyruvate synthase subunit PorA (porA), found in Pyrococcus furiosus (strain ATCC 43587 / DSM 3638 / JCM 8422 / Vc1).